Reading from the N-terminus, the 407-residue chain is MELLEEDLTCPICCSLFDDPRVLPCSHNFCKKCLEGILEGNVRNSLWRSSPFKCPTCRKETSATGVNSLQVNYSLKGIVEKYNKIKVSPKMPVCKGHLGQPLNIFCLTDMQLICGICATRGEHTKHVFCSIEDAYAQERDAFESLFQSFETWRRGDALSRLDTLETSKRKSLQLLTKDSDKVKEFFEKLQYTLDQKKNEILSDFETMKLAVMQAYDPEINKLNTILQEQRMAFNIAEAFKDVSEPIIFLQQMQEFREKIKVIKETPLPPSNLPSSPLMKNFDTSQWEDIKLVDVDKLSLPQDTGTFISKIPWRLYPLFVVVILLGLLIFFSPTMFLEWSLFDEIATWKDNLSNFSSYLTRSADFVEQSVFYWEQLTDGLFIFSERLKSFTLVVLNNVAEFVCKYKLL.

The segment at 10–58 (CPICCSLFDDPRVLPCSHNFCKKCLEGILEGNVRNSLWRSSPFKCPTCR) adopts an RING-type zinc-finger fold. The B box-type zinc-finger motif lies at 89–131 (PKMPVCKGHLGQPLNIFCLTDMQLICGICATRGEHTKHVFCSI). Residues Cys-94, His-97, Cys-117, and His-123 each coordinate Zn(2+). Residues 172 to 200 (LQLLTKDSDKVKEFFEKLQYTLDQKKNEI) adopt a coiled-coil conformation. A helical transmembrane segment spans residues 316-336 (PLFVVVILLGLLIFFSPTMFL).

In terms of assembly, interacts (via C-terminal domain) with VCP. Interacts with AKT1; the interaction ubiquitinates AKT1 and leads to its proteasomal degradation. Interacts with MDM2; the interaction ubiquitinates AKT1 and leads to its proteasomal degradation. Interacts with p62/SQSTM1. Interacts with TRAF6. Interacts with IKBKG/NEMO. In terms of processing, auto-ubiquitinated; requires the RING-type zinc finger. Auto-polyubiquitination leads to proteasomal degradation.

It is found in the endoplasmic reticulum membrane. The enzyme catalyses S-ubiquitinyl-[E2 ubiquitin-conjugating enzyme]-L-cysteine + [acceptor protein]-L-lysine = [E2 ubiquitin-conjugating enzyme]-L-cysteine + N(6)-ubiquitinyl-[acceptor protein]-L-lysine.. It participates in protein modification; protein ubiquitination. In terms of biological role, endoplasmic reticulum (ER) membrane anchored E3 ligase involved in the retrotranslocation and turnover of membrane and secretory proteins from the ER through a set of processes named ER-associated degradation (ERAD). This process acts on misfolded proteins as well as in the regulated degradation of correctly folded proteins. Enhances ionizing radiation-induced p53/TP53 stability and apoptosis via ubiquitinating MDM2 and AKT1 and decreasing AKT1 kinase activity through MDM2 and AKT1 proteasomal degradation. Regulates ER stress-induced autophagy, and may act as a tumor suppressor. Also plays a role in innate immune response by stimulating NF-kappa-B activity in the TLR2 signaling pathway. Ubiquitinates TRAF6 via the 'Lys-29'-linked polyubiquitination chain resulting in NF-kappa-B activation. Participates as well in T-cell receptor-mediated NF-kappa-B activation. In the presence of TNF, modulates the IKK complex by regulating IKBKG/NEMO ubiquitination leading to the repression of NF-kappa-B. The sequence is that of E3 ubiquitin-protein ligase TRIM13 (TRIM13) from Bos taurus (Bovine).